A 211-amino-acid chain; its full sequence is Large ribosomal subunit protein uL3 (211 aa).

The protein belongs to the universal ribosomal protein uL3 family. As to quaternary structure, part of the 50S ribosomal subunit. Forms a cluster with proteins L14 and L19.

Its function is as follows. One of the primary rRNA binding proteins, it binds directly near the 3'-end of the 23S rRNA, where it nucleates assembly of the 50S subunit. The sequence is that of Large ribosomal subunit protein uL3 from Geotalea daltonii (strain DSM 22248 / JCM 15807 / FRC-32) (Geobacter daltonii).